A 161-amino-acid chain; its full sequence is MEKIKEKLNSLKLESESWQEKYEELREQLKELEQSNTEKENEIKSLSAKNEQLDSEVEKLESQLSDTKQLAEDSNNLRSNNENYTKKNQDLEQQLEDSEAKLKEAMDKLKEADLNSEQMGRRIVALEEERDEWEKKCEEFQSKYEEAQKELDEIANSLENL.

Positions Met1–Leu161 form a coiled coil. Basic and acidic residues predominate over residues Leu32–Ile43. A disordered region spans residues Leu32–Asp97. Ser55 bears the Phosphoserine mark. The span at Ser62–Asn83 shows a compositional bias: polar residues. Phosphoserine occurs at positions 116 and 157.

As to quaternary structure, homodimer.

Its subcellular location is the cytoplasm. The protein localises to the cytoskeleton. Functionally, involved in cell morphogenesis. Binds to F-actin and stabilizes the actin filaments. In Saccharomyces cerevisiae (strain ATCC 204508 / S288c) (Baker's yeast), this protein is Tropomyosin-2 (TPM2).